A 202-amino-acid chain; its full sequence is N-(5'-phosphoribosyl)anthranilate isomerase (202 aa).

Belongs to the TrpF family.

It catalyses the reaction N-(5-phospho-beta-D-ribosyl)anthranilate = 1-(2-carboxyphenylamino)-1-deoxy-D-ribulose 5-phosphate. It participates in amino-acid biosynthesis; L-tryptophan biosynthesis; L-tryptophan from chorismate: step 3/5. The protein is N-(5'-phosphoribosyl)anthranilate isomerase of Listeria welshimeri serovar 6b (strain ATCC 35897 / DSM 20650 / CCUG 15529 / CIP 8149 / NCTC 11857 / SLCC 5334 / V8).